We begin with the raw amino-acid sequence, 353 residues long: Ferrochelatase (353 aa).

The span at 1 to 13 (MTLERTGRDEEKA) shows a compositional bias: basic and acidic residues. Positions 1–23 (MTLERTGRDEEKALTQPPSGHSS) are disordered. Residues His223 and Glu304 each contribute to the Fe cation site.

Belongs to the ferrochelatase family.

The protein localises to the cytoplasm. It catalyses the reaction heme b + 2 H(+) = protoporphyrin IX + Fe(2+). The protein operates within porphyrin-containing compound metabolism; protoheme biosynthesis; protoheme from protoporphyrin-IX: step 1/1. Its function is as follows. Catalyzes the ferrous insertion into protoporphyrin IX. The sequence is that of Ferrochelatase from Chelativorans sp. (strain BNC1).